We begin with the raw amino-acid sequence, 304 residues long: Non-structural maintenance of chromosomes element 3 homolog (304 aa).

Disordered stretches follow at residues 1-82 (MLQK…PRSQ) and 285-304 (ALAD…APSS). Residues 32 to 43 (AGEDARVLRDGF) are compositionally biased toward basic and acidic residues. 3 positions are modified to phosphoserine: Ser-57, Ser-60, and Ser-64. A compositionally biased stretch (low complexity) spans 60–80 (SQGPSPQGARRAQAAPAVGPR). An interaction with NSMCE1 region spans residues 78-304 (GPRSQKQLEL…PQPSGPAPSS (227 aa)). One can recognise an MAGE domain in the interval 85 to 285 (LELKVSELVQ…KDWPAQYCEA (201 aa)).

In terms of assembly, component of the SMC5-SMC6 complex which consists at least of SMC5, SMC6, NSMCE2, NSMCE1, NSMCE4A or EID3 and NSMCE3. NSMCE1, NSMCE4A or EID3 and NSMCE3 probably form a subcomplex that bridges the head domains of the SMC5:SMC6 heterodimer. Interacts with PJA1. Interacts with E2F1 (via C-terminus). Interacts with NGFR (via C-terminus). Interacts with NSMCE1. Interacts with NSMCE4. Interacts with SMC6. Interacts with EID3. Ubiquitous.

Its subcellular location is the cytoplasm. The protein localises to the nucleus. It localises to the chromosome. It is found in the telomere. Component of the SMC5-SMC6 complex, a complex involved in repair of DNA double-strand breaks by homologous recombination. The complex may promote sister chromatid homologous recombination by recruiting the SMC1-SMC3 cohesin complex to double-strand breaks. The complex is required for telomere maintenance via recombination in ALT (alternative lengthening of telomeres) cell lines and mediates sumoylation of shelterin complex (telosome) components which is proposed to lead to shelterin complex disassembly in ALT-associated PML bodies (APBs). In vitro enhances ubiquitin ligase activity of NSMCE1. Proposed to act through recruitment and/or stabilization of the Ubl-conjugating enzyme (E2) at the E3:substrate complex. May be a growth suppressor that facilitates the entry of the cell into cell cycle arrest. This Homo sapiens (Human) protein is Non-structural maintenance of chromosomes element 3 homolog.